Here is a 1092-residue protein sequence, read N- to C-terminus: NAD-specific glutamate dehydrogenase (1092 aa).

K626 is an active-site residue.

The protein belongs to the Glu/Leu/Phe/Val dehydrogenases family. In terms of assembly, homotetramer. Interacts with NNK1. Post-translationally, phosphorylated by a complex containing the NNK1 kinase.

The enzyme catalyses L-glutamate + NAD(+) + H2O = 2-oxoglutarate + NH4(+) + NADH + H(+). Functionally, NAD(+)-dependent glutamate dehydrogenase which degrades glutamate to ammonia and alpha-ketoglutarate. This chain is NAD-specific glutamate dehydrogenase (GDH2), found in Saccharomyces cerevisiae (strain ATCC 204508 / S288c) (Baker's yeast).